A 301-amino-acid chain; its full sequence is 2-phosphoglycerate kinase (301 aa).

An ATP-cone domain is found at 2–89 (IRVIEKGDKV…FWRRFRKMKV (88 aa)).

The protein belongs to the 2-phosphoglycerate kinase family. A divalent metal cation serves as cofactor.

It carries out the reaction (2R)-2-phosphoglycerate + ATP = (2R)-2,3-bisphosphoglycerate + ADP + H(+). Its pathway is thermoadapter biosynthesis; cyclic 2,3-diphosphoglycerate biosynthesis; cyclic 2,3-diphosphoglycerate from 2-phospho-D-glycerate: step 1/2. Catalyzes the phosphorylation of 2-phosphoglycerate to 2,3-diphosphoglycerate. Involved in the biosynthesis of cyclic 2,3-bisphosphoglycerate, a thermoprotectant. This Pyrococcus horikoshii (strain ATCC 700860 / DSM 12428 / JCM 9974 / NBRC 100139 / OT-3) protein is 2-phosphoglycerate kinase.